The primary structure comprises 142 residues: Holo-[acyl-carrier-protein] synthase (142 aa).

Residues Asp-8 and Glu-57 each contribute to the Mg(2+) site.

This sequence belongs to the P-Pant transferase superfamily. AcpS family. Mg(2+) serves as cofactor.

It is found in the cytoplasm. It catalyses the reaction apo-[ACP] + CoA = holo-[ACP] + adenosine 3',5'-bisphosphate + H(+). In terms of biological role, transfers the 4'-phosphopantetheine moiety from coenzyme A to a Ser of acyl-carrier-protein. This chain is Holo-[acyl-carrier-protein] synthase, found in Maricaulis maris (strain MCS10) (Caulobacter maris).